A 1555-amino-acid polypeptide reads, in one-letter code: Glycogen debranching enzyme (1555 aa).

Position 87 is a phosphoserine (Ser-87). Active-site residues include Asp-549, His-552, and Asp-650.

The protein belongs to the glycogen debranching enzyme family. As to quaternary structure, monomer. Interacts with NHLRC1/malin. The N-terminus is blocked. Post-translationally, ubiquitinated.

Its subcellular location is the cytoplasm. It carries out the reaction Transfers a segment of a (1-&gt;4)-alpha-D-glucan to a new position in an acceptor, which may be glucose or a (1-&gt;4)-alpha-D-glucan.. The enzyme catalyses Hydrolysis of (1-&gt;6)-alpha-D-glucosidic branch linkages in glycogen phosphorylase limit dextrin.. Multifunctional enzyme acting as 1,4-alpha-D-glucan:1,4-alpha-D-glucan 4-alpha-D-glycosyltransferase and amylo-1,6-glucosidase in glycogen degradation. The sequence is that of Glycogen debranching enzyme (AGL) from Oryctolagus cuniculus (Rabbit).